The following is a 150-amino-acid chain: D-aminoacyl-tRNA deacylase (150 aa).

The Gly-cisPro motif, important for rejection of L-amino acids signature appears at 137–138; it reads GP.

The protein belongs to the DTD family. Homodimer.

It is found in the cytoplasm. It carries out the reaction glycyl-tRNA(Ala) + H2O = tRNA(Ala) + glycine + H(+). The catalysed reaction is a D-aminoacyl-tRNA + H2O = a tRNA + a D-alpha-amino acid + H(+). An aminoacyl-tRNA editing enzyme that deacylates mischarged D-aminoacyl-tRNAs. Also deacylates mischarged glycyl-tRNA(Ala), protecting cells against glycine mischarging by AlaRS. Acts via tRNA-based rather than protein-based catalysis; rejects L-amino acids rather than detecting D-amino acids in the active site. By recycling D-aminoacyl-tRNA to D-amino acids and free tRNA molecules, this enzyme counteracts the toxicity associated with the formation of D-aminoacyl-tRNA entities in vivo and helps enforce protein L-homochirality. The chain is D-aminoacyl-tRNA deacylase from Listeria monocytogenes serotype 4b (strain CLIP80459).